Consider the following 185-residue polypeptide: Ribosome-recycling factor (185 aa).

The tract at residues 143-163 (EKEKLISEDDNKKGMDDIQKE) is disordered.

It belongs to the RRF family.

Its subcellular location is the cytoplasm. In terms of biological role, responsible for the release of ribosomes from messenger RNA at the termination of protein biosynthesis. May increase the efficiency of translation by recycling ribosomes from one round of translation to another. The polypeptide is Ribosome-recycling factor (Syntrophomonas wolfei subsp. wolfei (strain DSM 2245B / Goettingen)).